A 595-amino-acid polypeptide reads, in one-letter code: Outer dynein arm-docking complex subunit 3 (595 aa).

The tract at residues 1 to 69 (MTSPLCRAAS…RGAGKPSVHS (69 aa)) is disordered. Coiled coils occupy residues 94 to 327 (WNIK…REHL) and 385 to 473 (FAQL…ASKL).

In terms of assembly, component of the outer dynein arm-docking complex along with ODAD1, ODAD2, ODAD4 and CLXN. Interacts with ODAD1. Interacts with PIERCE1 and PIERCE2; the interactions link the outer dynein arms docking complex (ODA-DC) to the internal microtubule inner proteins (MIP) in cilium axoneme.

The protein localises to the cytoplasm. The protein resides in the cytoskeleton. It localises to the cilium basal body. Its subcellular location is the microtubule organizing center. It is found in the centrosome. The protein localises to the centriole. The protein resides in the cilium axoneme. Its function is as follows. Component of the outer dynein arm-docking complex (ODA-DC) that mediates outer dynein arms (ODA) binding onto the doublet microtubule. Involved in mediating assembly of both ODAs and their axonemal docking complex onto ciliary microtubules. This chain is Outer dynein arm-docking complex subunit 3, found in Homo sapiens (Human).